Here is a 421-residue protein sequence, read N- to C-terminus: MADLKRTQPLARDAMAYVLAGGRGSRLKELTDRRAKPAVYFGGKTRIIDFALSNALNSGIRRLGVATQYKAHSLIRHLQRGWNFLRPERNESFDILPASQRVSETQWYEGTADAVYQNIDIIEAYGPEYMVILAGDHIYKMDYEMMLRQHVDANADVTVGCLEVPRMEATGFGVMHVDAKDNIIAFVEKPADPPGIPGNPDFALASMGIYVFKTKFLMEQLRRDAAEPGSSRDFGKDIIPYIVQHGKAIAHRFTKSCVRSTAENEAYWRDVGTVDAYWEANIDLTDITPELDLYDRDWPIWTYAELKPPAKFVHDEDGRRGSAVSSLVSGDCIVSGATLKKSLIFTGARINSYSTLEEVVMLPDVHVGRNAKLKRVVIDHGVRIPEGLVVGEDPALDAKRFRVSEKGICLITQDMINKLGL.

Residues Tyr108, Gly173, 188-189, and Ser206 each bind alpha-D-glucose 1-phosphate; that span reads EK.

The protein belongs to the bacterial/plant glucose-1-phosphate adenylyltransferase family. Homotetramer.

The catalysed reaction is alpha-D-glucose 1-phosphate + ATP + H(+) = ADP-alpha-D-glucose + diphosphate. It functions in the pathway glycan biosynthesis; glycogen biosynthesis. Involved in the biosynthesis of ADP-glucose, a building block required for the elongation reactions to produce glycogen. Catalyzes the reaction between ATP and alpha-D-glucose 1-phosphate (G1P) to produce pyrophosphate and ADP-Glc. The polypeptide is Glucose-1-phosphate adenylyltransferase (Mesorhizobium japonicum (strain LMG 29417 / CECT 9101 / MAFF 303099) (Mesorhizobium loti (strain MAFF 303099))).